A 734-amino-acid polypeptide reads, in one-letter code: 1,4-alpha-glucan branching enzyme GlgB (734 aa).

The active-site Nucleophile is the Asp413. Glu466 (proton donor) is an active-site residue.

Belongs to the glycosyl hydrolase 13 family. GlgB subfamily. In terms of assembly, monomer.

It catalyses the reaction Transfers a segment of a (1-&gt;4)-alpha-D-glucan chain to a primary hydroxy group in a similar glucan chain.. The protein operates within glycan biosynthesis; glycogen biosynthesis. Functionally, catalyzes the formation of the alpha-1,6-glucosidic linkages in glycogen by scission of a 1,4-alpha-linked oligosaccharide from growing alpha-1,4-glucan chains and the subsequent attachment of the oligosaccharide to the alpha-1,6 position. The sequence is that of 1,4-alpha-glucan branching enzyme GlgB from Nitrosomonas europaea (strain ATCC 19718 / CIP 103999 / KCTC 2705 / NBRC 14298).